The chain runs to 500 residues: Glutamyl-tRNA(Gln) amidotransferase subunit A (500 aa).

Residues Lys-81 and Ser-161 each act as charge relay system in the active site. Catalysis depends on Ser-185, which acts as the Acyl-ester intermediate.

This sequence belongs to the amidase family. GatA subfamily. As to quaternary structure, heterotrimer of A, B and C subunits.

It carries out the reaction L-glutamyl-tRNA(Gln) + L-glutamine + ATP + H2O = L-glutaminyl-tRNA(Gln) + L-glutamate + ADP + phosphate + H(+). Functionally, allows the formation of correctly charged Gln-tRNA(Gln) through the transamidation of misacylated Glu-tRNA(Gln) in organisms which lack glutaminyl-tRNA synthetase. The reaction takes place in the presence of glutamine and ATP through an activated gamma-phospho-Glu-tRNA(Gln). The chain is Glutamyl-tRNA(Gln) amidotransferase subunit A from Rhodospirillum rubrum (strain ATCC 11170 / ATH 1.1.1 / DSM 467 / LMG 4362 / NCIMB 8255 / S1).